We begin with the raw amino-acid sequence, 242 residues long: Probable transcriptional regulatory protein lp_2253 (242 aa).

Residues 1–21 are disordered; the sequence is MSGHSKWHNIQGRKNAQDAKR.

Belongs to the TACO1 family.

It is found in the cytoplasm. The protein is Probable transcriptional regulatory protein lp_2253 of Lactiplantibacillus plantarum (strain ATCC BAA-793 / NCIMB 8826 / WCFS1) (Lactobacillus plantarum).